A 417-amino-acid chain; its full sequence is Serine--tRNA ligase (417 aa).

Position 232 to 234 (232 to 234 (TAE)) interacts with L-serine. ATP is bound by residues 263-265 (RRE) and valine 279. Glutamate 286 is a binding site for L-serine. 350 to 353 (EISS) is an ATP binding site. L-serine is bound at residue serine 385.

This sequence belongs to the class-II aminoacyl-tRNA synthetase family. Type-1 seryl-tRNA synthetase subfamily. Homodimer. The tRNA molecule binds across the dimer.

Its subcellular location is the cytoplasm. It carries out the reaction tRNA(Ser) + L-serine + ATP = L-seryl-tRNA(Ser) + AMP + diphosphate + H(+). The enzyme catalyses tRNA(Sec) + L-serine + ATP = L-seryl-tRNA(Sec) + AMP + diphosphate + H(+). The protein operates within aminoacyl-tRNA biosynthesis; selenocysteinyl-tRNA(Sec) biosynthesis; L-seryl-tRNA(Sec) from L-serine and tRNA(Sec): step 1/1. Its function is as follows. Catalyzes the attachment of serine to tRNA(Ser). Is also able to aminoacylate tRNA(Sec) with serine, to form the misacylated tRNA L-seryl-tRNA(Sec), which will be further converted into selenocysteinyl-tRNA(Sec). The protein is Serine--tRNA ligase of Leptospira interrogans serogroup Icterohaemorrhagiae serovar copenhageni (strain Fiocruz L1-130).